The following is a 55-amino-acid chain: Rubredoxin-2 (55 aa).

The 54-residue stretch at 1–54 (MRKWQCVVCGFIYDEALGLPEEGIPAGTRWEDIPADWVCPDCGVGKIDFEMIEI) folds into the Rubredoxin-like domain. Residues Cys-6, Cys-9, Cys-39, and Cys-42 each contribute to the Fe cation site.

It belongs to the rubredoxin family. Requires Fe(3+) as cofactor.

It localises to the cytoplasm. The protein operates within hydrocarbon metabolism; alkane degradation. Its function is as follows. Involved in the hydrocarbon hydroxylating system, which transfers electrons from NADH to rubredoxin reductase and then through rubredoxin to alkane 1 monooxygenase. In Pseudomonas aeruginosa (strain ATCC 15692 / DSM 22644 / CIP 104116 / JCM 14847 / LMG 12228 / 1C / PRS 101 / PAO1), this protein is Rubredoxin-2 (rubA2).